Here is a 416-residue protein sequence, read N- to C-terminus: UPF0761 membrane protein Rfer_2991 (416 aa).

6 consecutive transmembrane segments (helical) span residues 60 to 80 (MALVPLVTVALAIFTAFPMFA), 117 to 137 (LGGAGIALLLVTAVALILTID), 156 to 176 (VLVYWAALTLGPLVLGVSLSI), 187 to 207 (VVGVMPGGVQFLLDVLQFFMV), 222 to 242 (WVKWSHAWAGGMFVSAGLELA), and 268 to 288 (ILLIWIYVAWIIVLLGAVIAA).

Belongs to the UPF0761 family.

The protein localises to the cell inner membrane. The sequence is that of UPF0761 membrane protein Rfer_2991 from Albidiferax ferrireducens (strain ATCC BAA-621 / DSM 15236 / T118) (Rhodoferax ferrireducens).